Consider the following 127-residue polypeptide: UPF0716 protein YtzA (127 aa).

The next 4 membrane-spanning stretches (helical) occupy residues 3-22 (FLFLLFIVFPAIEIGIFLFL), 26-46 (IGILPTVLFMILTGIIGAAAA), 70-90 (AIADGLCIFIGGLLLMLPGFL), and 93-115 (LAGACLLIPFTRGWCKPILFKWL).

Belongs to the UPF0716 (FxsA) family.

It is found in the cell membrane. The polypeptide is UPF0716 protein YtzA (ytzA) (Bacillus subtilis (strain 168)).